Consider the following 69-residue polypeptide: Large ribosomal subunit protein uL29 (69 aa).

It belongs to the universal ribosomal protein uL29 family.

The chain is Large ribosomal subunit protein uL29 (rpmC) from Lactococcus lactis subsp. lactis (strain IL1403) (Streptococcus lactis).